Here is a 356-residue protein sequence, read N- to C-terminus: 3-dehydroquinate synthase (356 aa).

NAD(+) contacts are provided by residues 71-76, 105-109, 129-130, Lys142, and Lys151; these read EGEASK, GVTGD, and TS. The Zn(2+) site is built by Glu184, His247, and His264.

It belongs to the sugar phosphate cyclases superfamily. Dehydroquinate synthase family. The cofactor is Co(2+). Zn(2+) serves as cofactor. It depends on NAD(+) as a cofactor.

Its subcellular location is the cytoplasm. The catalysed reaction is 7-phospho-2-dehydro-3-deoxy-D-arabino-heptonate = 3-dehydroquinate + phosphate. Its pathway is metabolic intermediate biosynthesis; chorismate biosynthesis; chorismate from D-erythrose 4-phosphate and phosphoenolpyruvate: step 2/7. In terms of biological role, catalyzes the conversion of 3-deoxy-D-arabino-heptulosonate 7-phosphate (DAHP) to dehydroquinate (DHQ). The chain is 3-dehydroquinate synthase from Lactococcus lactis subsp. cremoris (strain MG1363).